Reading from the N-terminus, the 128-residue chain is Sulfurtransferase TusD (128 aa).

The active-site Cysteine persulfide intermediate is the cysteine 78.

Belongs to the DsrE/TusD family. In terms of assembly, heterohexamer, formed by a dimer of trimers. The hexameric TusBCD complex contains 2 copies each of TusB, TusC and TusD. The TusBCD complex interacts with TusE.

The protein localises to the cytoplasm. Functionally, part of a sulfur-relay system required for 2-thiolation of 5-methylaminomethyl-2-thiouridine (mnm(5)s(2)U) at tRNA wobble positions. Accepts sulfur from TusA and transfers it in turn to TusE. The protein is Sulfurtransferase TusD of Escherichia coli (strain K12 / MC4100 / BW2952).